The following is a 631-amino-acid chain: Dolichyl-diphosphooligosaccharide--protein glycosyltransferase subunit 2 (631 aa).

A signal peptide spans 1–22 (MALPGSSTVFLLALTIIASTQA). Residues 23 to 540 (LTPTHYLTKH…REPEKRPPTV (518 aa)) lie on the Lumenal side of the membrane. An N-linked (GlcNAc...) asparagine glycan is attached at Asn106. Lys154 participates in a covalent cross-link: Glycyl lysine isopeptide (Lys-Gly) (interchain with G-Cter in ubiquitin). The chain crosses the membrane as a helical span at residues 541–561 (VSNTFTALILSPLLLLFALWI). The Cytoplasmic segment spans residues 562–571 (RIGANVSNFT). The chain crosses the membrane as a helical span at residues 572–592 (FAPSTIVFHLGHAAMLGLMYV). At 593–596 (YWTQ) the chain is on the lumenal side. A helical membrane pass occupies residues 597–617 (LNMFQTLKYLAILGSVTFLAG). Residues 618-631 (NRMLAQQAIKRTAH) are Cytoplasmic-facing.

The protein belongs to the SWP1 family. Component of the oligosaccharyltransferase (OST) complex. OST exists in two different complex forms which contain common core subunits RPN1, RPN2, OST48, OST4, DAD1 and TMEM258, either STT3A or STT3B as catalytic subunits, and form-specific accessory subunits. STT3A complex assembly occurs through the formation of 3 subcomplexes. Subcomplex 1 contains RPN1 and TMEM258, subcomplex 2 contains the STT3A-specific subunits STT3A, DC2/OSTC, and KCP2 as well as the core subunit OST4, and subcomplex 3 contains RPN2, DAD1, and OST48. The STT3A complex can form stable complexes with the Sec61 complex or with both the Sec61 and TRAP complexes. Interacts with DDI2. Interacts with TMEM35A/NACHO.

The protein localises to the endoplasmic reticulum. It is found in the endoplasmic reticulum membrane. It functions in the pathway protein modification; protein glycosylation. Its function is as follows. Subunit of the oligosaccharyl transferase (OST) complex that catalyzes the initial transfer of a defined glycan (Glc(3)Man(9)GlcNAc(2) in eukaryotes) from the lipid carrier dolichol-pyrophosphate to an asparagine residue within an Asn-X-Ser/Thr consensus motif in nascent polypeptide chains, the first step in protein N-glycosylation. N-glycosylation occurs cotranslationally and the complex associates with the Sec61 complex at the channel-forming translocon complex that mediates protein translocation across the endoplasmic reticulum (ER). All subunits are required for a maximal enzyme activity. The chain is Dolichyl-diphosphooligosaccharide--protein glycosyltransferase subunit 2 from Bos taurus (Bovine).